The sequence spans 357 residues: Transactivator protein DR7 (357 aa).

Positions Leu-107–Thr-187 are interaction with host p53.

This sequence belongs to the herpesviridae US22 family. In terms of assembly, interacts with host p53 and inhibits p53-activated transcription.

Functionally, involved in transactivation. Displays transforming activity. The polypeptide is Transactivator protein DR7 (DR7L) (Homo sapiens (Human)).